Reading from the N-terminus, the 461-residue chain is Argininosuccinate lyase (461 aa).

It belongs to the lyase 1 family. Argininosuccinate lyase subfamily.

The protein localises to the cytoplasm. The enzyme catalyses 2-(N(omega)-L-arginino)succinate = fumarate + L-arginine. The protein operates within amino-acid biosynthesis; L-arginine biosynthesis; L-arginine from L-ornithine and carbamoyl phosphate: step 3/3. The polypeptide is Argininosuccinate lyase (Aeromonas salmonicida (strain A449)).